The following is a 218-amino-acid chain: Glycerol-3-phosphate acyltransferase (218 aa).

6 consecutive transmembrane segments (helical) span residues 3–23 (FAIF…YWIA), 53–73 (GFPV…LSGI), 82–102 (FQLA…FLGF), 112–132 (LGVF…VFLV), 142–162 (IGSI…SILL), and 166–186 (EVSY…ILTH).

Belongs to the PlsY family. In terms of assembly, probably interacts with PlsX.

Its subcellular location is the cell inner membrane. It catalyses the reaction an acyl phosphate + sn-glycerol 3-phosphate = a 1-acyl-sn-glycero-3-phosphate + phosphate. The protein operates within lipid metabolism; phospholipid metabolism. Functionally, catalyzes the transfer of an acyl group from acyl-phosphate (acyl-PO(4)) to glycerol-3-phosphate (G3P) to form lysophosphatidic acid (LPA). This enzyme utilizes acyl-phosphate as fatty acyl donor, but not acyl-CoA or acyl-ACP. This Leptospira borgpetersenii serovar Hardjo-bovis (strain JB197) protein is Glycerol-3-phosphate acyltransferase.